The primary structure comprises 306 residues: Ribonucleoside-diphosphate reductase small subunit (306 aa).

The Fe cation site is built by Asp-66, Glu-96, and His-99. Tyr-103 is an active-site residue. Residues Ile-153 to Leu-173 form a helical membrane-spanning segment. Residues Glu-159, Glu-193, and His-196 each contribute to the Fe cation site.

The protein belongs to the ribonucleoside diphosphate reductase small chain family. Heterotetramer composed of a homodimer of the large subunit (R1) and a homodimer of the small subunit (R2). Larger multisubunit protein complex are also active, composed of (R1)n(R2)n. Requires Fe cation as cofactor.

The protein resides in the host membrane. It catalyses the reaction a 2'-deoxyribonucleoside 5'-diphosphate + [thioredoxin]-disulfide + H2O = a ribonucleoside 5'-diphosphate + [thioredoxin]-dithiol. Its function is as follows. Ribonucleoside-diphosphate reductase holoenzyme provides the precursors necessary for viral DNA synthesis. Allows virus growth in non-dividing cells, as well as reactivation from latency in infected hosts. Catalyzes the biosynthesis of deoxyribonucleotides from the corresponding ribonucleotides. This is Ribonucleoside-diphosphate reductase small subunit from Varicella-zoster virus (strain Dumas) (HHV-3).